The primary structure comprises 122 residues: Urocortin (122 aa).

A signal peptide spans 1-25 (MRQRGRATLLVALLLLVQLRPESSQ). A propeptide spanning residues 26-80 (WSPAAAAANVVQDPNLRWNPGVRNQGGGVRALLLLLAERFPRRAGSEPAGERQRR) is cleaved from the precursor. Val120 is modified (valine amide).

This sequence belongs to the sauvagine/corticotropin-releasing factor/urotensin I family. In terms of assembly, interacts with CRHR1 and CRHR2 (via their N-terminal extracellular domain).

Its subcellular location is the secreted. Acts in vitro to stimulate the secretion of adrenocorticotropic hormone (ACTH). Binds with high affinity to CRF receptor types 1, 2-alpha, and 2-beta. Plays a role in the establishment of normal hearing thresholds. Reduces food intake and regulates ghrelin levels in gastric body and plasma. The sequence is that of Urocortin (Ucn) from Rattus norvegicus (Rat).